Consider the following 592-residue polypeptide: Movement and RNA silencing protein VP6 (592 aa).

The tract at residues 450–469 is disordered; sequence SSDEENADDPNQGWNGTPVH.

It localises to the host cell junction. The protein localises to the host plasmodesma. Transports viral genome to neighboring plant cells directly through plasmosdesmata, without any budding. The movement protein allows efficient cell to cell propagation, by bypassing the host cell wall barrier. Displays sequence non-specific nucleic acid binding activity. Acts as a suppressor of RNA-mediated gene silencing, also known as post-transcriptional gene silencing (PTGS), a mechanism of plant viral defense that limits the accumulation of viral RNAs. This chain is Movement and RNA silencing protein VP6, found in Oryza latifolia (Indian wild rice).